A 150-amino-acid polypeptide reads, in one-letter code: Ribosome maturation factor RimP (150 aa).

This sequence belongs to the RimP family.

The protein localises to the cytoplasm. Required for maturation of 30S ribosomal subunits. The chain is Ribosome maturation factor RimP from Thermotoga sp. (strain RQ2).